Consider the following 323-residue polypeptide: Methenyltetrahydromethanopterin cyclohydrolase (323 aa).

Belongs to the MCH family.

It localises to the cytoplasm. It carries out the reaction 5,10-methenyl-5,6,7,8-tetrahydromethanopterin + H2O = N(5)-formyl-5,6,7,8-tetrahydromethanopterin + H(+). The protein operates within one-carbon metabolism; methanogenesis from CO(2); 5,10-methenyl-5,6,7,8-tetrahydromethanopterin from CO(2): step 3/3. Catalyzes the reversible interconversion of 5-formyl-H(4)MPT to methenyl-H(4)MPT(+). The polypeptide is Methenyltetrahydromethanopterin cyclohydrolase (Methanococcus maripaludis (strain DSM 14266 / JCM 13030 / NBRC 101832 / S2 / LL)).